Reading from the N-terminus, the 301-residue chain is Phosphatidylglycerol--prolipoprotein diacylglyceryl transferase (301 aa).

Helical transmembrane passes span 10 to 30, 57 to 77, 92 to 112, and 119 to 139; these read IAFS…LAGF, LLFY…MLFY, VWEG…AVAW, and MHMF…LGFG. Residue R140 participates in a 1,2-diacyl-sn-glycero-3-phospho-(1'-sn-glycerol) binding. 3 helical membrane-spanning segments follow: residues 202 to 222, 230 to 250, and 264 to 284; these read PSQL…LWLF, YAVS…VEFV, and LTRG…LFWL.

Belongs to the Lgt family.

The protein localises to the cell inner membrane. The catalysed reaction is L-cysteinyl-[prolipoprotein] + a 1,2-diacyl-sn-glycero-3-phospho-(1'-sn-glycerol) = an S-1,2-diacyl-sn-glyceryl-L-cysteinyl-[prolipoprotein] + sn-glycerol 1-phosphate + H(+). Its pathway is protein modification; lipoprotein biosynthesis (diacylglyceryl transfer). Its function is as follows. Catalyzes the transfer of the diacylglyceryl group from phosphatidylglycerol to the sulfhydryl group of the N-terminal cysteine of a prolipoprotein, the first step in the formation of mature lipoproteins. In Xylella fastidiosa (strain M12), this protein is Phosphatidylglycerol--prolipoprotein diacylglyceryl transferase.